We begin with the raw amino-acid sequence, 449 residues long: 23S rRNA (uracil(1939)-C(5))-methyltransferase RlmD (449 aa).

The TRAM domain occupies 1–66; sequence MGRSRHHNKL…AKFDEAKVVE (66 aa). Residues C79, C85, C88, and C169 each contribute to the [4Fe-4S] cluster site. Residues Q280, F309, N314, E330, N357, and D379 each coordinate S-adenosyl-L-methionine. C405 acts as the Nucleophile in catalysis.

This sequence belongs to the class I-like SAM-binding methyltransferase superfamily. RNA M5U methyltransferase family. RlmD subfamily.

It carries out the reaction uridine(1939) in 23S rRNA + S-adenosyl-L-methionine = 5-methyluridine(1939) in 23S rRNA + S-adenosyl-L-homocysteine + H(+). Its function is as follows. Catalyzes the formation of 5-methyl-uridine at position 1939 (m5U1939) in 23S rRNA. The chain is 23S rRNA (uracil(1939)-C(5))-methyltransferase RlmD from Francisella tularensis subsp. tularensis (strain FSC 198).